The following is a 330-amino-acid chain: Stearoyl-CoA desaturase 5 (330 aa).

The Cytoplasmic segment spans residues Met-1–Asn-49. Asn-49 contributes to the substrate binding site. A helical transmembrane segment spans residues Val-50 to Ala-70. Residues Lys-71 to Pro-72 lie on the Lumenal side of the membrane. A helical transmembrane segment spans residues Leu-73–Ala-93. The Fe cation site is built by His-94 and His-99. The Histidine box-1 motif lies at His-94 to His-99. Residues His-94–Lys-193 are Cytoplasmic-facing. Residues Asn-122, Arg-129, and Asp-130 each contribute to the substrate site. Residues His-131, His-134, and His-135 each coordinate Fe cation. A Histidine box-2 motif is present at residues His-131–His-135. The substrate site is built by Arg-162 and Lys-163. A helical membrane pass occupies residues Ile-194–Glu-214. Position 215 (Ser-215) is a topological domain, lumenal. A helical transmembrane segment spans residues Leu-216–Val-238. Position 236 (Trp-236) interacts with substrate. The Cytoplasmic segment spans residues Asn-239–Ala-330. 4 residues coordinate Fe cation: His-243, His-272, His-275, and His-276. Positions His-272–His-276 match the Histidine box-3 motif.

This sequence belongs to the fatty acid desaturase type 1 family. As to quaternary structure, may self-associate and form homodimers. Fe(2+) is required as a cofactor. As to expression, detected in fetal brain, and at lower levels in fetal kidney. Detected in adult brain and pancreas, and at lower levels in kidney and lung. Expressed in spiral ganglion cells and the organ of Corti of fetal cochlea.

Its subcellular location is the endoplasmic reticulum membrane. It carries out the reaction octadecanoyl-CoA + 2 Fe(II)-[cytochrome b5] + O2 + 2 H(+) = (9Z)-octadecenoyl-CoA + 2 Fe(III)-[cytochrome b5] + 2 H2O. The catalysed reaction is hexadecanoyl-CoA + 2 Fe(II)-[cytochrome b5] + O2 + 2 H(+) = (9Z)-hexadecenoyl-CoA + 2 Fe(III)-[cytochrome b5] + 2 H2O. Stearoyl-CoA desaturase that utilizes O(2) and electrons from reduced cytochrome b5 to introduce the first double bond into saturated fatty acyl-CoA substrates. Catalyzes the insertion of a cis double bond at the delta-9 position into fatty acyl-CoA substrates including palmitoyl-CoA and stearoyl-CoA. Gives rise to a mixture of 16:1 and 18:1 unsaturated fatty acids. Involved in neuronal cell proliferation and differentiation through down-regulation of EGFR/AKT/MAPK and Wnt signaling pathways. The chain is Stearoyl-CoA desaturase 5 (SCD5) from Homo sapiens (Human).